The primary structure comprises 374 residues: Putative F-box/kelch-repeat protein At4g39756 (374 aa).

The F-box domain maps to 17 to 63 (CPSFLSLPEEILVNCLARIPKSYYPKLSLVCKSFCSLILSMELYVER). Kelch repeat units lie at residues 135–180 (ELYA…VING), 181–227 (KIYV…GMAV), 231–278 (KIYV…RQSC), and 280–308 (WYDT…ILEV).

The chain is Putative F-box/kelch-repeat protein At4g39756 from Arabidopsis thaliana (Mouse-ear cress).